Reading from the N-terminus, the 270-residue chain is Putative protein-disulfide oxidoreductase RT0103 (270 aa).

An N-terminal signal peptide occupies residues 1–17 (MKNIFIVLIFLFLSSCA). Positions 71 to 264 (SVLTQDLHEQ…ISRAVDRALE (194 aa)) constitute a Thioredoxin domain. A disulfide bond links cysteine 117 and cysteine 120.

This sequence belongs to the thioredoxin family. DsbA subfamily.

Its subcellular location is the periplasm. May be required for disulfide bond formation in some proteins. The chain is Putative protein-disulfide oxidoreductase RT0103 from Rickettsia typhi (strain ATCC VR-144 / Wilmington).